A 71-amino-acid chain; its full sequence is Ranatuerin-2P (71 aa).

Positions 1–20 (MFTMKKSLLLFFFLGTISLS) are cleaved as a signal peptide. A propeptide spanning residues 21 to 44 (LCEQERGADEDDGVEITEEEVKRG) is cleaved from the precursor. A disulfide bond links cysteine 66 and cysteine 71.

As to expression, expressed by the skin glands.

Its subcellular location is the secreted. Antibacterial activity against Gram-positive bacterium S.aureus and Gram-negative bacterium E.coli. Has activity against C.albicans. This is Ranatuerin-2P from Lithobates pipiens (Northern leopard frog).